A 257-amino-acid polypeptide reads, in one-letter code: Glutamate racemase (257 aa).

Substrate is bound by residues aspartate 12 to serine 13 and tyrosine 44 to glycine 45. Residue cysteine 75 is the Proton donor/acceptor of the active site. Asparagine 76 to threonine 77 is a binding site for substrate. Cysteine 185 serves as the catalytic Proton donor/acceptor. Threonine 186 to histidine 187 is a substrate binding site.

This sequence belongs to the aspartate/glutamate racemases family.

It carries out the reaction L-glutamate = D-glutamate. It participates in cell wall biogenesis; peptidoglycan biosynthesis. In terms of biological role, provides the (R)-glutamate required for cell wall biosynthesis. The protein is Glutamate racemase of Clostridium botulinum (strain 657 / Type Ba4).